The sequence spans 129 residues: Antimicrobial peptide NK-lysin (129 aa).

The signal sequence occupies residues 1–6; sequence PGLAFS. A propeptide spanning residues 7-46 is cleaved from the precursor; that stretch reads GLTPEHSALARAHPCDGEQFCQNLAPEDPQGDQLLQREEL. The Saposin B-type domain maps to 46 to 126; sequence LGLICESCRK…VDIKICKEKT (81 aa). 3 disulfide bridges follow: Cys-50–Cys-122, Cys-53–Cys-116, and Cys-81–Cys-91. Residues 125-129 constitute a propeptide that is removed on maturation; sequence KTGLI.

Cytotoxic T and NK cells.

It is found in the secreted. Its function is as follows. May be an effector molecule of cytotoxic activity. High activity against E.coli and B.megaterium, moderate against A.calcoaceticus and S.pyogenes. No activity against P.aeruginosa, S.aureus and Salmonella. Has some antifungal activity against C.albicans. This Sus scrofa (Pig) protein is Antimicrobial peptide NK-lysin (NKL).